A 313-amino-acid chain; its full sequence is tRNA dimethylallyltransferase (313 aa).

ATP is bound at residue 13–20 (GPTASGKT). 15 to 20 (TASGKT) serves as a coordination point for substrate. Interaction with substrate tRNA regions lie at residues 38–41 (DSAL), 162–166 (QRLSR), 243–248 (RCVGYR), and 276–283 (KRQITWLR).

It belongs to the IPP transferase family. Monomer. Mg(2+) serves as cofactor.

It catalyses the reaction adenosine(37) in tRNA + dimethylallyl diphosphate = N(6)-dimethylallyladenosine(37) in tRNA + diphosphate. Catalyzes the transfer of a dimethylallyl group onto the adenine at position 37 in tRNAs that read codons beginning with uridine, leading to the formation of N6-(dimethylallyl)adenosine (i(6)A). The sequence is that of tRNA dimethylallyltransferase from Aliivibrio salmonicida (strain LFI1238) (Vibrio salmonicida (strain LFI1238)).